Here is a 93-residue protein sequence, read N- to C-terminus: Small ribosomal subunit protein uS19 (93 aa).

This sequence belongs to the universal ribosomal protein uS19 family.

Functionally, protein S19 forms a complex with S13 that binds strongly to the 16S ribosomal RNA. This Ehrlichia chaffeensis (strain ATCC CRL-10679 / Arkansas) protein is Small ribosomal subunit protein uS19.